The sequence spans 440 residues: MKIFGKWLLVTLLICSMPVKAALDIVITEGIDAARPIAVIPFVWQGTGPMPSQISDVVMSDLARSGTFSPADELSLPQRGISTLAQFNASAWMTQPAEAVVMGSIKPYGGDKYLVSFELIDLVKAQLQPDSQSAQDLVIDSRETIITAAQFRQYGHRISDVVYEKLTGIRGAFLTRIAYVVVNHGEKSPYKLMISDYDGYNEQMLLRSPEPLMSPSWSPDGQRLAYVSFENRKAEIYVQNIYTQQRTNVTSFDGINGAPVFSPDGKKLAVTLSKDGQPEVYVVDIATKAIKRVTNHYAIDTEPSWFPDGKSLLITSERGGRPQLYRVFLDSGKISRLTFEGEWNLGGSIAPDGRSIIFVNRTNGKFNIARMDLETRFMQVLTSTRLDESPSVAPNGTMVIYGTTYQGKQVLAAVSMDGRFKARLPVGQGEVKSPSWSPFL.

Residues 1 to 21 form the signal peptide; sequence MKIFGKWLLVTLLICSMPVKA.

It belongs to the TolB family. The Tol-Pal system is composed of five core proteins: the inner membrane proteins TolA, TolQ and TolR, the periplasmic protein TolB and the outer membrane protein Pal. They form a network linking the inner and outer membranes and the peptidoglycan layer.

Its subcellular location is the periplasm. Functionally, part of the Tol-Pal system, which plays a role in outer membrane invagination during cell division and is important for maintaining outer membrane integrity. In Shewanella halifaxensis (strain HAW-EB4), this protein is Tol-Pal system protein TolB.